Reading from the N-terminus, the 128-residue chain is Large ribosomal subunit protein bL12 (128 aa).

Belongs to the bacterial ribosomal protein bL12 family. Homodimer. Part of the ribosomal stalk of the 50S ribosomal subunit. Forms a multimeric L10(L12)X complex, where L10 forms an elongated spine to which 2 to 4 L12 dimers bind in a sequential fashion. Binds GTP-bound translation factors.

Forms part of the ribosomal stalk which helps the ribosome interact with GTP-bound translation factors. Is thus essential for accurate translation. This chain is Large ribosomal subunit protein bL12, found in Saccharopolyspora erythraea (strain ATCC 11635 / DSM 40517 / JCM 4748 / NBRC 13426 / NCIMB 8594 / NRRL 2338).